Consider the following 76-residue polypeptide: uncharacterized protein (76 aa).

Residues 15 to 69 form the HTH cro/C1-type domain; that stretch reads VRIVRKEQNLRQDELAGVAGVGLRFIVDLEAGKPTAQIGKVLQVLQTLGCSIDIL. The segment at residues 26–45 is a DNA-binding region (H-T-H motif); that stretch reads QDELAGVAGVGLRFIVDLEA.

This is an uncharacterized protein from Sinorhizobium fredii (strain NBRC 101917 / NGR234).